The chain runs to 121 residues: Holo-[acyl-carrier-protein] synthase (121 aa).

Mg(2+) contacts are provided by aspartate 8 and glutamate 58.

It belongs to the P-Pant transferase superfamily. AcpS family. Mg(2+) serves as cofactor.

Its subcellular location is the cytoplasm. The catalysed reaction is apo-[ACP] + CoA = holo-[ACP] + adenosine 3',5'-bisphosphate + H(+). Transfers the 4'-phosphopantetheine moiety from coenzyme A to a Ser of acyl-carrier-protein. The polypeptide is Holo-[acyl-carrier-protein] synthase (Bacillus pumilus (strain SAFR-032)).